Here is a 515-residue protein sequence, read N- to C-terminus: RNA-splicing ligase RtcB homolog (515 aa).

Residues aspartate 129, cysteine 132, histidine 237, histidine 269, and histidine 363 each coordinate Mn(2+). Position 236–240 (236–240) interacts with GMP; that stretch reads NHYAE. GMP contacts are provided by residues 363–364, 412–415, serine 419, 438–441, and lysine 514; these read HN, GGTM, and HGAG. Histidine 438 functions as the GMP-histidine intermediate in the catalytic mechanism.

This sequence belongs to the RtcB family. Catalytic component of the tRNA-splicing ligase complex. It depends on Mn(2+) as a cofactor.

The catalysed reaction is a 3'-end 3'-phospho-ribonucleotide-RNA + a 5'-end dephospho-ribonucleoside-RNA + GTP = a ribonucleotidyl-ribonucleotide-RNA + GMP + diphosphate. The enzyme catalyses a 3'-end 2',3'-cyclophospho-ribonucleotide-RNA + a 5'-end dephospho-ribonucleoside-RNA + GTP + H2O = a ribonucleotidyl-ribonucleotide-RNA + GMP + diphosphate + H(+). Its function is as follows. Catalytic subunit of the tRNA-splicing ligase complex that acts by directly joining spliced tRNA halves to mature-sized tRNAs by incorporating the precursor-derived splice junction phosphate into the mature tRNA as a canonical 3',5'-phosphodiester. May act as an RNA ligase with broad substrate specificity, and may function toward other RNAs. The chain is RNA-splicing ligase RtcB homolog from Ostreococcus tauri.